Reading from the N-terminus, the 122-residue chain is Large ribosomal subunit protein uL14c (122 aa).

The protein belongs to the universal ribosomal protein uL14 family. In terms of assembly, part of the 50S ribosomal subunit.

It is found in the plastid. Its subcellular location is the chloroplast. Its function is as follows. Binds to 23S rRNA. This Pyropia yezoensis (Susabi-nori) protein is Large ribosomal subunit protein uL14c.